Consider the following 250-residue polypeptide: Envelope glycoprotein L (250 aa).

A signal peptide spans 1 to 18 (MELLLFVMSLILLTFSKA). In terms of domain architecture, gL betaherpesvirus-type spans 31–239 (KLDDCIAAVI…ETYNSKLPFR (209 aa)). Cysteines 136 and 141 form a disulfide.

This sequence belongs to the herpesviridae glycoprotein L (gL) family. Betaherpesvirinae gL subfamily. In terms of assembly, interacts with glycoprotein H (gH); this interaction is necessary for the correct processing and cell surface expression of gH. Part of a gH-gL-gO complex.

The protein localises to the virion membrane. It is found in the host cell membrane. Its subcellular location is the host Golgi apparatus. The protein resides in the host trans-Golgi network. Functionally, the heterodimer glycoprotein H-glycoprotein L is required for the fusion of viral and plasma membranes leading to virus entry into the host cell. Acts as a functional inhibitor of gH and maintains gH in an inhibited form. Upon binding to host integrins, gL dissociates from gH leading to activation of the viral fusion glycoproteins gB and gH. This Human herpesvirus 6A (strain Uganda-1102) (HHV-6 variant A) protein is Envelope glycoprotein L.